Reading from the N-terminus, the 432-residue chain is uncharacterized protein (432 aa).

2 SIS domains span residues 105-244 (WLTE…DLVS) and 277-422 (CDKK…VDLP).

This is an uncharacterized protein from Saccharomyces cerevisiae (strain ATCC 204508 / S288c) (Baker's yeast).